Reading from the N-terminus, the 187-residue chain is Ribosome-recycling factor (187 aa).

It belongs to the RRF family.

The protein resides in the cytoplasm. In terms of biological role, responsible for the release of ribosomes from messenger RNA at the termination of protein biosynthesis. May increase the efficiency of translation by recycling ribosomes from one round of translation to another. The protein is Ribosome-recycling factor of Paracoccus denitrificans (strain Pd 1222).